A 275-amino-acid polypeptide reads, in one-letter code: Dermonecrotic toxin SpaSicTox-betaIIA2 (275 aa).

The active site involves histidine 5. Glutamate 25 and aspartate 27 together coordinate Mg(2+). The active-site Nucleophile is the histidine 41. Cystine bridges form between cysteine 45/cysteine 51 and cysteine 47/cysteine 190. Aspartate 85 contacts Mg(2+).

The protein belongs to the arthropod phospholipase D family. Class II subfamily. The cofactor is Mg(2+). As to expression, expressed by the venom gland.

The protein localises to the secreted. The enzyme catalyses an N-(acyl)-sphingosylphosphocholine = an N-(acyl)-sphingosyl-1,3-cyclic phosphate + choline. It catalyses the reaction an N-(acyl)-sphingosylphosphoethanolamine = an N-(acyl)-sphingosyl-1,3-cyclic phosphate + ethanolamine. It carries out the reaction a 1-acyl-sn-glycero-3-phosphocholine = a 1-acyl-sn-glycero-2,3-cyclic phosphate + choline. The catalysed reaction is a 1-acyl-sn-glycero-3-phosphoethanolamine = a 1-acyl-sn-glycero-2,3-cyclic phosphate + ethanolamine. Its function is as follows. Dermonecrotic toxins cleave the phosphodiester linkage between the phosphate and headgroup of certain phospholipids (sphingolipid and lysolipid substrates), forming an alcohol (often choline) and a cyclic phosphate. This toxin acts on sphingomyelin (SM). It may also act on ceramide phosphoethanolamine (CPE), lysophosphatidylcholine (LPC) and lysophosphatidylethanolamine (LPE), but not on lysophosphatidylserine (LPS), and lysophosphatidylglycerol (LPG). It acts by transphosphatidylation, releasing exclusively cyclic phosphate products as second products. Induces dermonecrosis, hemolysis, increased vascular permeability, edema, inflammatory response, and platelet aggregation. The chain is Dermonecrotic toxin SpaSicTox-betaIIA2 from Sicarius patagonicus (Six-eyed sand spider).